Here is a 225-residue protein sequence, read N- to C-terminus: NAD(P)H-quinone oxidoreductase subunit K, chloroplastic (225 aa).

[4Fe-4S] cluster contacts are provided by cysteine 43, cysteine 44, cysteine 108, and cysteine 139.

This sequence belongs to the complex I 20 kDa subunit family. In terms of assembly, NDH is composed of at least 16 different subunits, 5 of which are encoded in the nucleus. It depends on [4Fe-4S] cluster as a cofactor.

Its subcellular location is the plastid. The protein resides in the chloroplast thylakoid membrane. The catalysed reaction is a plastoquinone + NADH + (n+1) H(+)(in) = a plastoquinol + NAD(+) + n H(+)(out). It carries out the reaction a plastoquinone + NADPH + (n+1) H(+)(in) = a plastoquinol + NADP(+) + n H(+)(out). NDH shuttles electrons from NAD(P)H:plastoquinone, via FMN and iron-sulfur (Fe-S) centers, to quinones in the photosynthetic chain and possibly in a chloroplast respiratory chain. The immediate electron acceptor for the enzyme in this species is believed to be plastoquinone. Couples the redox reaction to proton translocation, and thus conserves the redox energy in a proton gradient. This Eucalyptus globulus subsp. globulus (Tasmanian blue gum) protein is NAD(P)H-quinone oxidoreductase subunit K, chloroplastic.